Here is a 350-residue protein sequence, read N- to C-terminus: Fe(3+) ions import ATP-binding protein FbpC (350 aa).

The region spanning 4–236 (LDIINLSKSF…PNDEQTAHFL (233 aa)) is the ABC transporter domain. Position 36 to 43 (36 to 43 (GPSGSGKT)) interacts with ATP.

The protein belongs to the ABC transporter superfamily. Fe(3+) ion importer (TC 3.A.1.10) family. The complex is composed of two ATP-binding proteins (FbpC), two transmembrane proteins (FbpB) and a solute-binding protein (FbpA).

It localises to the cell inner membrane. The enzyme catalyses Fe(3+)(out) + ATP + H2O = Fe(3+)(in) + ADP + phosphate + H(+). Its function is as follows. Part of the ABC transporter complex FbpABC involved in Fe(3+) ions import. Responsible for energy coupling to the transport system. This Pseudomonas fluorescens (strain Pf0-1) protein is Fe(3+) ions import ATP-binding protein FbpC.